The sequence spans 1071 residues: Exportin-1 (1071 aa).

Positions 46–112 constitute an Importin N-terminal domain; the sequence is AQEVLTHLKE…KKYVVGLIIK (67 aa). 6 HEAT repeats span residues 217–240, 241–277, 354–472, 515–553, 560–597, and 602–639; these read QNAP…PLGY, IFET…VSVS, MLLV…YVDT, RFLV…QYPR, KFLK…KCRR, and VQVG…AVGY. Residues 327–450 form a necessary for interaction with Ran and nuclear export complex formation region; it reads CTFLKEHGQL…VREFMKDTDS (124 aa). The residue at position 391 (serine 391) is a Phosphoserine. Residues 411 to 481 are necessary for interaction with RANBP3; that stretch reads TVLSKVRLLM…TEIIMTKKLQ (71 aa). An N6-acetyllysine modification is found at lysine 446. Threonine 448 bears the Phosphothreonine mark. Phosphoserine is present on serine 450. Position 454 is a phosphotyrosine (tyrosine 454). N6-acetyllysine is present on lysine 693. HEAT repeat units follow at residues 775–813, 885–916, and 917–954; these read NFVP…KLGG, TMRN…SFYQ, and TYFC…NLVE. Residues serine 966 and serine 1031 each carry the phosphoserine modification. Residues 1002 to 1039 form an HEAT 10 repeat; sequence FSLNQDIPAFKEHLRDFLVQIKEFAGEDTSDLFLEERE.

Belongs to the exportin family. As to quaternary structure, found in a U snRNA export complex with PHAX/RNUXA, NCBP1/CBP80, NCBP2/CBP20, RAN, XPO1 and m7G-capped RNA. Component of a nuclear export receptor complex composed of KPNB1, RAN, SNUPN and XPO1. Found in a trimeric export complex with SNUPN, RAN and XPO1. Found in a nuclear export complex with RANBP3 and RAN. Found in a 60S ribosomal subunit export complex with NMD3, RAN, XPO1. Interacts with DDX3X, NMD3, NUP42, NUP88, NUP214, RANBP3 and TERT. Interacts with NEMF (via its N-terminus). Interacts with the monomeric form of BIRC5/survivin deacetylated at 'Lys-129'. Interacts with DTNBP1 and SERTAD2; the interactions translocate DTNBP1 and SERTAD2 out of the nucleus. Interacts with ATF2. Interacts with SLC35G1 and STIM1. Interacts with DCAF8. Interacts with CPEB3. Interacts with HAX1. Interacts with BOK; translocates to the cytoplasm. Interacts with HSP90AB1. Interacts with LRPPRC; interacts with LRPPRC alone and also when LRPPRC is in complex with EIF4E and with EIF4E sensitivity element (4ESE)-containing mRNAs to form an EIF4E-dependent mRNA export complex.

It localises to the cytoplasm. The protein localises to the nucleus. Its subcellular location is the nucleoplasm. It is found in the cajal body. The protein resides in the nucleolus. Mediates the nuclear export of cellular proteins (cargos) bearing a leucine-rich nuclear export signal (NES) and of RNAs. In the nucleus, in association with RANBP3, binds cooperatively to the NES on its target protein and to the GTPase Ran in its active GTP-bound form. Docking of this complex to the nuclear pore complex (NPC) is mediated through binding to nucleoporins. Upon transit of a nuclear export complex into the cytoplasm, disassembling of the complex and hydrolysis of Ran-GTP to Ran-GDP (induced by RANBP1 and RANGAP1, respectively) cause release of the cargo from the export receptor. The directionality of nuclear export is thought to be conferred by an asymmetric distribution of the GTP- and GDP-bound forms of Ran between the cytoplasm and nucleus. Involved in U3 snoRNA transport from Cajal bodies to nucleoli. Binds to late precursor U3 snoRNA bearing a TMG cap. In Rattus norvegicus (Rat), this protein is Exportin-1 (Xpo1).